Reading from the N-terminus, the 564-residue chain is Septin-9 (564 aa).

M1 bears the N-acetylmethionine mark. Position 12 is a phosphoserine (S12). Residues T24 and T31 each carry the phosphothreonine modification. Disordered regions lie at residues 38-165 (VASS…PVTD) and 178-224 (PAEA…DSEV). K44 carries the post-translational modification N6-acetyllysine. Phosphoserine occurs at positions 64, 67, and 71. A compositionally biased stretch (polar residues) spans 95–109 (DISSKQVESTASTPG). The segment covering 116–134 (KRAEVLGHKTPEPVPRRTE) has biased composition (basic and acidic residues). T125 bears the Phosphothreonine mark. The segment covering 190–203 (TLENSEAPMSQLQS) has biased composition (polar residues). Y258 carries the phosphotyrosine modification. Positions 275–546 (QGFEFNIMVV…EAYRVKRLNE (272 aa)) constitute a Septin-type G domain. Positions 285–292 (GQSGLGKS) are G1 motif. 285-292 (GQSGLGKS) is a GTP binding site. Phosphoserine is present on residues S307 and S312. GTP is bound by residues T319, G345, 425 to 433 (KADTLTLEE), G480, and R495. The tract at residues 342–345 (DTPG) is G3 motif. The G4 motif stretch occupies residues 424 to 427 (AKAD).

It belongs to the TRAFAC class TrmE-Era-EngA-EngB-Septin-like GTPase superfamily. Septin GTPase family. In terms of assembly, septins polymerize into heterooligomeric protein complexes that form filaments, and associate with cellular membranes, actin filaments, and microtubules. GTPase activity is required for filament formation. Interacts with SEPTIN2, SEPTIN6, SEPTIN7, SEPTIN11 and SEPTIN14. Interacts with RTKN and ARHGEF18. As to expression, expressed in the brain, mainly in the perikarya and processes of astrocytes in the cerebellum, dentate gyrus and corpus callosum (at protein level). In the sciatic nerve, highly expressed in Schwann cells (at protein level). Isoforms are differentially expressed in testes, kidney, liver, heart, spleen and brain. Undetectable in skeletal muscle.

It is found in the cytoplasm. The protein localises to the cytoskeleton. In terms of biological role, filament-forming cytoskeletal GTPase. May play a role in cytokinesis (Potential). In Rattus norvegicus (Rat), this protein is Septin-9.